A 189-amino-acid polypeptide reads, in one-letter code: Movement protein (189 aa).

Belongs to the tombusvirus/aureusvirus movement protein p22 family. As to quaternary structure, interacts with host protein HFI22. Post-translationally, phosphorylated.

It is found in the host membrane. Its function is as follows. Transports viral genome to neighboring plant cells directly through plasmosdesmata, without any budding. The movement protein allows efficient cell to cell propagation, by bypassing the host cell wall barrier. Displays RNA-binding activity. This is Movement protein from Capsicum annuum (Capsicum pepper).